The following is a 101-amino-acid chain: NAD(P)H-quinone oxidoreductase subunit 4L, chloroplastic (101 aa).

3 consecutive transmembrane segments (helical) span residues 2–22 (MLEYVLFLSAYLFSIGIYGLI), 32–52 (MCLELILNAVNINLVTFSDLF), and 61–81 (IFSIFVIAIAAAEAAIGPAIV).

This sequence belongs to the complex I subunit 4L family. As to quaternary structure, NDH is composed of at least 16 different subunits, 5 of which are encoded in the nucleus.

Its subcellular location is the plastid. It localises to the chloroplast thylakoid membrane. It catalyses the reaction a plastoquinone + NADH + (n+1) H(+)(in) = a plastoquinol + NAD(+) + n H(+)(out). The enzyme catalyses a plastoquinone + NADPH + (n+1) H(+)(in) = a plastoquinol + NADP(+) + n H(+)(out). Functionally, NDH shuttles electrons from NAD(P)H:plastoquinone, via FMN and iron-sulfur (Fe-S) centers, to quinones in the photosynthetic chain and possibly in a chloroplast respiratory chain. The immediate electron acceptor for the enzyme in this species is believed to be plastoquinone. Couples the redox reaction to proton translocation, and thus conserves the redox energy in a proton gradient. This chain is NAD(P)H-quinone oxidoreductase subunit 4L, chloroplastic, found in Acorus calamus var. americanus (American sweet flag).